A 600-amino-acid chain; its full sequence is Nisin transport ATP-binding protein NisT (600 aa).

Helical transmembrane passes span 34–54 (AIYL…SLFI), 69–89 (LINI…LGQL), 147–167 (AIIV…FIGT), 168–188 (WNIG…VLFL), and 260–280 (IFLD…MILS). The ABC transmembrane type-1 domain maps to 34-317 (AIYLIVLNAI…MIQNIYIIYN (284 aa)). The ABC transporter domain occupies 352-592 (VKVINLSYVY…CQYYQELYYS (241 aa)). 386–393 (GKNGSGKS) lines the ATP pocket.

Belongs to the ABC transporter superfamily. Nisin exporter (TC 3.A.1.111.3) family.

It localises to the cell membrane. Probably implicated in the export process of the lantibiotic nisin. The sequence is that of Nisin transport ATP-binding protein NisT (nisT) from Lactococcus lactis subsp. lactis (Streptococcus lactis).